The sequence spans 337 residues: Glyceraldehyde-3-phosphate dehydrogenase (337 aa).

Residues 12–13 (RI), aspartate 34, and arginine 79 contribute to the NAD(+) site. Residues 150 to 152 (SCT), threonine 181, 210 to 211 (TG), and arginine 233 each bind D-glyceraldehyde 3-phosphate. The active-site Nucleophile is the cysteine 151. Asparagine 315 contacts NAD(+).

It belongs to the glyceraldehyde-3-phosphate dehydrogenase family. As to quaternary structure, homotetramer.

It localises to the cytoplasm. The enzyme catalyses D-glyceraldehyde 3-phosphate + phosphate + NAD(+) = (2R)-3-phospho-glyceroyl phosphate + NADH + H(+). It functions in the pathway carbohydrate degradation; glycolysis; pyruvate from D-glyceraldehyde 3-phosphate: step 1/5. The chain is Glyceraldehyde-3-phosphate dehydrogenase (GPD) from Podospora anserina (Pleurage anserina).